The chain runs to 107 residues: Ferredoxin 1 (107 aa).

2 consecutive 4Fe-4S ferredoxin-type domains span residues threonine 2 to proline 30 and asparagine 31 to glutamate 60. 2 residues coordinate [3Fe-4S] cluster: cysteine 9 and cysteine 17. The [4Fe-4S] cluster site is built by cysteine 21, cysteine 40, cysteine 43, and cysteine 46. Cysteine 50 provides a ligand contact to [3Fe-4S] cluster.

[4Fe-4S] cluster serves as cofactor. The cofactor is [3Fe-4S] cluster.

Ferredoxins are iron-sulfur proteins that transfer electrons in a wide variety of metabolic reactions. This Stutzerimonas stutzeri (Pseudomonas stutzeri) protein is Ferredoxin 1.